A 132-amino-acid polypeptide reads, in one-letter code: ATP synthase epsilon chain (132 aa).

This sequence belongs to the ATPase epsilon chain family. In terms of assembly, F-type ATPases have 2 components, CF(1) - the catalytic core - and CF(0) - the membrane proton channel. CF(1) has five subunits: alpha(3), beta(3), gamma(1), delta(1), epsilon(1). CF(0) has three main subunits: a, b and c.

The protein resides in the cell membrane. Produces ATP from ADP in the presence of a proton gradient across the membrane. The sequence is that of ATP synthase epsilon chain from Clostridium kluyveri (strain NBRC 12016).